Reading from the N-terminus, the 208-residue chain is Uracil phosphoribosyltransferase (208 aa).

5-phospho-alpha-D-ribose 1-diphosphate is bound by residues arginine 78, arginine 103, and 130–138; that span reads DPMLATANS. Uracil is bound by residues isoleucine 193 and 198 to 200; that span reads GDA. Aspartate 199 contacts 5-phospho-alpha-D-ribose 1-diphosphate.

The protein belongs to the UPRTase family. Requires Mg(2+) as cofactor.

It carries out the reaction UMP + diphosphate = 5-phospho-alpha-D-ribose 1-diphosphate + uracil. Its pathway is pyrimidine metabolism; UMP biosynthesis via salvage pathway; UMP from uracil: step 1/1. With respect to regulation, allosterically activated by GTP. Functionally, catalyzes the conversion of uracil and 5-phospho-alpha-D-ribose 1-diphosphate (PRPP) to UMP and diphosphate. This chain is Uracil phosphoribosyltransferase, found in Brucella melitensis biotype 2 (strain ATCC 23457).